Reading from the N-terminus, the 2170-residue chain is ATP-binding cassette sub-family A member 7 (2170 aa).

A helical membrane pass occupies residues 22–42 (PIQLVVELLWPLFLFFILVAV). The Extracellular portion of the chain corresponds to 43-547 (RHSHPPLEHH…DVFLRVLSRS (505 aa)). An intrachain disulfide couples cysteine 75 to cysteine 222. Asparagine 309 carries an N-linked (GlcNAc...) asparagine glycan. A run of 6 helical transmembrane segments spans residues 548–568 (LPLF…KAVV), 591–611 (LGWF…LVLV), 624–644 (VVVF…SFLL), 653–673 (LAAA…VLCV), 679–699 (LPLG…GFGC), and 733–753 (AFLL…EAVC). Residues 805 to 1036 (VSIRGLKKHF…LGCGYYLTLV (232 aa)) form the ABC transporter 1 domain. 839–846 (GHNGAGKT) serves as a coordination point for ATP. A helical membrane pass occupies residues 847-867 (TTLSILSGLFPPSSGSASILG). A disordered region spans residues 1044 to 1086 (THDLKGDTEDPRREKKSGSEGKTADTVLTRDGPHRSSQVPAPD). The segment covering 1045–1066 (HDLKGDTEDPRREKKSGSEGKT) has biased composition (basic and acidic residues). The chain crosses the membrane as a helical span at residues 1257 to 1277 (IVLPALFVGLALFFTLIVPPF). At 1278-1562 (GQYPPLQLSP…TLIASSVDVL (285 aa)) the chain is on the extracellular side. A disulfide bridge connects residues cysteine 1370 and cysteine 1384. 6 consecutive transmembrane segments (helical) span residues 1563–1583 (VSIC…LVLI), 1609–1629 (FLWD…IFLA), 1646–1666 (LLLL…SFFF), 1674–1694 (VVLT…TFVL), 1708–1728 (ILKQ…LIDM), and 1754–1774 (IIGK…LITL). The region spanning 1818 to 2050 (LVLRDLTKVY…FGAGHTLTLR (233 aa)) is the ABC transporter 2 domain. ATP is bound at residue 1852 to 1859 (GVNGAGKT). The tract at residues 2129–2170 (QGEEEEGSGQETETREVSTPGLQHPKRVSRFLEDPSSVETVI) is disordered.

This sequence belongs to the ABC transporter superfamily. ABCA family. N-glycosylated. As to expression, expressed in blood cells. Also detected in brain and ovary tissues (at protein level). Expressed in platelet.

The protein localises to the cell membrane. It localises to the golgi apparatus membrane. Its subcellular location is the early endosome membrane. It is found in the cell projection. The protein resides in the ruffle membrane. The protein localises to the phagocytic cup. It localises to the cytoplasm. Functionally, ATP-binding cassette (ABC) transporter that plays a role in lipid homeostasis and macrophage-mediated phagocytosis. Binds APOA1 and may function in apolipoprotein-mediated phospholipid efflux from cells. May also mediate cholesterol efflux. May regulate cellular ceramide homeostasis during keratinocyte differentiation. Involved in lipid raft organization and CD1D localization on thymocytes and antigen-presenting cells, which plays an important role in natural killer T-cell development and activation. Plays a role in phagocytosis of apoptotic cells by macrophages. Macrophage phagocytosis is stimulated by APOA1 or APOA2, probably by stabilization of ABCA7. Also involved in phagocytic clearance of amyloid-beta by microglia cells and macrophages. Further limits amyloid-beta production by playing a role in the regulation of amyloid-beta A4 precursor protein (APP) endocytosis and/or processing. This is ATP-binding cassette sub-family A member 7 (Abca7) from Rattus norvegicus (Rat).